An 80-amino-acid polypeptide reads, in one-letter code: Progonadoliberin-1 (80 aa).

The signal sequence occupies residues 1–21 (MGIKRALWWMVVCVVVLQVSA). Position 22 is a pyrrolidone carboxylic acid (Gln22). Gly31 bears the Glycine amide mark.

The protein belongs to the GnRH family.

The protein localises to the secreted. Stimulates the secretion of gonadotropins. In Clarias gariepinus (North African catfish), this protein is Progonadoliberin-1 (gnrh1).